The chain runs to 360 residues: tRNA/tmRNA (uracil-C(5))-methyltransferase (360 aa).

Glutamine 185, tyrosine 213, asparagine 218, glutamate 234, and aspartate 294 together coordinate S-adenosyl-L-methionine. Cysteine 319 (nucleophile) is an active-site residue. Glutamate 353 (proton acceptor) is an active-site residue.

This sequence belongs to the class I-like SAM-binding methyltransferase superfamily. RNA M5U methyltransferase family. TrmA subfamily.

It catalyses the reaction uridine(54) in tRNA + S-adenosyl-L-methionine = 5-methyluridine(54) in tRNA + S-adenosyl-L-homocysteine + H(+). The enzyme catalyses uridine(341) in tmRNA + S-adenosyl-L-methionine = 5-methyluridine(341) in tmRNA + S-adenosyl-L-homocysteine + H(+). Functionally, dual-specificity methyltransferase that catalyzes the formation of 5-methyluridine at position 54 (m5U54) in all tRNAs, and that of position 341 (m5U341) in tmRNA (transfer-mRNA). This Nitratiruptor sp. (strain SB155-2) protein is tRNA/tmRNA (uracil-C(5))-methyltransferase.